The following is a 563-amino-acid chain: Arginine--tRNA ligase (563 aa).

Positions 123–133 (PNIAKDMHVGH) match the 'HIGH' region motif.

Belongs to the class-I aminoacyl-tRNA synthetase family. In terms of assembly, monomer.

Its subcellular location is the cytoplasm. The enzyme catalyses tRNA(Arg) + L-arginine + ATP = L-arginyl-tRNA(Arg) + AMP + diphosphate. This is Arginine--tRNA ligase from Chlamydia trachomatis serovar A (strain ATCC VR-571B / DSM 19440 / HAR-13).